Reading from the N-terminus, the 261-residue chain is Carbonic anhydrase 1 (261 aa).

At Ala-2 the chain carries N-acetylalanine. Residues 4-261 (ADWGYGSENG…LKGRTVRASF (258 aa)) form the Alpha-carbonic anhydrase domain. Catalysis depends on His-65, which acts as the Proton donor/acceptor. The Zn(2+) site is built by His-95, His-97, and His-120. Substrate-binding positions include Thr-200 and 200–201 (TH). Residues 239 to 261 (AVPVLSNHRPPQPLKGRTVRASF) form a disordered region.

The protein belongs to the alpha-carbonic anhydrase family. Requires Zn(2+) as cofactor.

The protein localises to the cytoplasm. It carries out the reaction hydrogencarbonate + H(+) = CO2 + H2O. The enzyme catalyses urea = cyanamide + H2O. Inhibited by acetazolamide. In terms of biological role, catalyzes the reversible hydration of carbon dioxide. Can hydrate cyanamide to urea. This Mus musculus (Mouse) protein is Carbonic anhydrase 1 (Ca1).